The following is a 209-amino-acid chain: Thiamine-phosphate synthase (209 aa).

Residues 39–43 (QLREK) and asparagine 71 contribute to the 4-amino-2-methyl-5-(diphosphooxymethyl)pyrimidine site. Residues aspartate 72 and aspartate 91 each coordinate Mg(2+). Serine 110 contacts 4-amino-2-methyl-5-(diphosphooxymethyl)pyrimidine. 136-138 (TGT) is a binding site for 2-[(2R,5Z)-2-carboxy-4-methylthiazol-5(2H)-ylidene]ethyl phosphate. Residue lysine 139 coordinates 4-amino-2-methyl-5-(diphosphooxymethyl)pyrimidine. 2-[(2R,5Z)-2-carboxy-4-methylthiazol-5(2H)-ylidene]ethyl phosphate is bound by residues glycine 166 and 186–187 (VS).

This sequence belongs to the thiamine-phosphate synthase family. The cofactor is Mg(2+).

The catalysed reaction is 2-[(2R,5Z)-2-carboxy-4-methylthiazol-5(2H)-ylidene]ethyl phosphate + 4-amino-2-methyl-5-(diphosphooxymethyl)pyrimidine + 2 H(+) = thiamine phosphate + CO2 + diphosphate. It catalyses the reaction 2-(2-carboxy-4-methylthiazol-5-yl)ethyl phosphate + 4-amino-2-methyl-5-(diphosphooxymethyl)pyrimidine + 2 H(+) = thiamine phosphate + CO2 + diphosphate. It carries out the reaction 4-methyl-5-(2-phosphooxyethyl)-thiazole + 4-amino-2-methyl-5-(diphosphooxymethyl)pyrimidine + H(+) = thiamine phosphate + diphosphate. It functions in the pathway cofactor biosynthesis; thiamine diphosphate biosynthesis; thiamine phosphate from 4-amino-2-methyl-5-diphosphomethylpyrimidine and 4-methyl-5-(2-phosphoethyl)-thiazole: step 1/1. In terms of biological role, condenses 4-methyl-5-(beta-hydroxyethyl)thiazole monophosphate (THZ-P) and 2-methyl-4-amino-5-hydroxymethyl pyrimidine pyrophosphate (HMP-PP) to form thiamine monophosphate (TMP). This Clostridium beijerinckii (strain ATCC 51743 / NCIMB 8052) (Clostridium acetobutylicum) protein is Thiamine-phosphate synthase.